Here is a 347-residue protein sequence, read N- to C-terminus: MPTPLTLADFDYHLPPELIAQSPAAERGGSRLLHLDAASRLHDRRFPDLAGLLRPHDLLVFNDTRVIKARLTGQKATGGKVEVLVERITAPDRALVHVRASKSPGPGMRLRLAEAFEAEVLGREGELFDLRFPAPVLDLLDAHGATPLPPYITHAADATDERRYQTVYAREPGAVAAPTAGLHFDQPMLEQLAAQGVQRAFVTLHVGAGTFQPVRVQNLAEHIMHAEWYTVPEATVAAIARARAHGGRIVAVGTTSVRALESAAAQAQDGPLAAAQGDTRLFITPGYRYRIVDALLTNFHLPQSTLLMLVSALAGVAPIRRAYAHAVAERYRFFSYGDAMFIETPAP.

This sequence belongs to the QueA family. Monomer.

It is found in the cytoplasm. It catalyses the reaction 7-aminomethyl-7-carbaguanosine(34) in tRNA + S-adenosyl-L-methionine = epoxyqueuosine(34) in tRNA + adenine + L-methionine + 2 H(+). It functions in the pathway tRNA modification; tRNA-queuosine biosynthesis. Transfers and isomerizes the ribose moiety from AdoMet to the 7-aminomethyl group of 7-deazaguanine (preQ1-tRNA) to give epoxyqueuosine (oQ-tRNA). This chain is S-adenosylmethionine:tRNA ribosyltransferase-isomerase, found in Bordetella bronchiseptica (strain ATCC BAA-588 / NCTC 13252 / RB50) (Alcaligenes bronchisepticus).